The primary structure comprises 486 residues: Protein ZINC INDUCED FACILITATOR 1 (486 aa).

A run of 12 helical transmembrane segments spans residues 41–61 (FVWIIVLSTSLPISSLYPFLY), 82–102 (FVGCSFMLGRALTSVFWGIVA), 109–129 (PIILLGTISIAIFNALFGLSS), 131–151 (FWMAIGTRFLLGSFNCLLGTM), 170–190 (AVSTAWGIGLIIGPALGGFLA), 212–232 (ALPCFTISAFALLVTVLCCFI), 288–308 (IIVYCVLCLHDTAYSEIFALW), 327–347 (TVLAISGLGLFSFQVFVYPLA), 362–384 (ALMIPIQMSYPFIAGLSGLSLSL), 391–408 (ILINVLSVSAITGLLILQ), 423–443 (IAMTAMSLFKTVGPAGAGILF), and 461–481 (VFFVLNVIVVVGVALTFKPFL).

Belongs to the major facilitator superfamily. In terms of tissue distribution, strongly expressed in developing leaves, differentiating zones of root tips and sepals of developing flowers. Restricted to vascular tissues in older leaves, mature roots, flowers, anthers and filaments. Not expressed in developing anthers.

The protein localises to the vacuole membrane. In terms of biological role, major facilitator superfamily (MFS) transporter involved in zinc tolerance by participating in vacuolar sequestration of zinc. This is Protein ZINC INDUCED FACILITATOR 1 (ZIF1) from Arabidopsis thaliana (Mouse-ear cress).